The chain runs to 197 residues: 3-isopropylmalate dehydratase small subunit (197 aa).

The protein belongs to the LeuD family. LeuD type 1 subfamily. As to quaternary structure, heterodimer of LeuC and LeuD.

The catalysed reaction is (2R,3S)-3-isopropylmalate = (2S)-2-isopropylmalate. The protein operates within amino-acid biosynthesis; L-leucine biosynthesis; L-leucine from 3-methyl-2-oxobutanoate: step 2/4. Catalyzes the isomerization between 2-isopropylmalate and 3-isopropylmalate, via the formation of 2-isopropylmaleate. The chain is 3-isopropylmalate dehydratase small subunit from Mycolicibacterium vanbaalenii (strain DSM 7251 / JCM 13017 / BCRC 16820 / KCTC 9966 / NRRL B-24157 / PYR-1) (Mycobacterium vanbaalenii).